An 80-amino-acid chain; its full sequence is Crustacean hyperglycemic hormones (80 aa).

3 disulfide bridges follow: Cys-13/Cys-49, Cys-29/Cys-45, and Cys-32/Cys-58. Residue Val-78 is modified to Valine amide.

Belongs to the arthropod CHH/MIH/GIH/VIH hormone family. As to expression, produced by the medulla terminalis X-organ in the eyestalks and transported to the sinus gland where they are stored and released.

It localises to the secreted. Its function is as follows. Hormone found in the sinus gland of isopods and decapods which controls the blood sugar level. Has a secretagogue action over the amylase released from the midgut gland. May act as a stress hormone and may be involved in the control of molting and reproduction. This is Crustacean hyperglycemic hormones from Penaeus vannamei (Whiteleg shrimp).